A 316-amino-acid polypeptide reads, in one-letter code: MQILLANPRGFCAGVDRAISIVENALAIYGAPIYVRHEVVHNRYVVDSLRERGAIFIEQISEVPDGAILIFSAHGVSQAVRNEAKSRDLTVFDATCPLVTKVHMEVARSSRRGEEAILIGHAGHPEVEGTMGQYSNPEGGMYLVESPEDVWKITVKDENNLSFMTQTTLSVDDTSEVIDALRSRFPKIVGPRKDDICYATTNRQEAVRALAEQADVVLVVGSKNSSNSNRLAELAQRMGKTAYLIDDANDIQEAWVQNAACVGVTAGASAPDVLVQNVITRLKALGGSDAHELTGREENIVFEVPKELRIDAREVQ.

Cys12 contacts [4Fe-4S] cluster. Positions 41 and 74 each coordinate (2E)-4-hydroxy-3-methylbut-2-enyl diphosphate. Dimethylallyl diphosphate is bound by residues His41 and His74. Residues His41 and His74 each contribute to the isopentenyl diphosphate site. Cys96 contacts [4Fe-4S] cluster. Residue His124 participates in (2E)-4-hydroxy-3-methylbut-2-enyl diphosphate binding. Residue His124 coordinates dimethylallyl diphosphate. An isopentenyl diphosphate-binding site is contributed by His124. The active-site Proton donor is the Glu126. Residue Thr167 coordinates (2E)-4-hydroxy-3-methylbut-2-enyl diphosphate. Position 197 (Cys197) interacts with [4Fe-4S] cluster. (2E)-4-hydroxy-3-methylbut-2-enyl diphosphate-binding residues include Ser225, Ser226, Asn227, and Ser269. 4 residues coordinate dimethylallyl diphosphate: Ser225, Ser226, Asn227, and Ser269. Isopentenyl diphosphate contacts are provided by Ser225, Ser226, Asn227, and Ser269.

Belongs to the IspH family. Homodimer. Requires [4Fe-4S] cluster as cofactor.

It carries out the reaction isopentenyl diphosphate + 2 oxidized [2Fe-2S]-[ferredoxin] + H2O = (2E)-4-hydroxy-3-methylbut-2-enyl diphosphate + 2 reduced [2Fe-2S]-[ferredoxin] + 2 H(+). The enzyme catalyses dimethylallyl diphosphate + 2 oxidized [2Fe-2S]-[ferredoxin] + H2O = (2E)-4-hydroxy-3-methylbut-2-enyl diphosphate + 2 reduced [2Fe-2S]-[ferredoxin] + 2 H(+). Its pathway is isoprenoid biosynthesis; dimethylallyl diphosphate biosynthesis; dimethylallyl diphosphate from (2E)-4-hydroxy-3-methylbutenyl diphosphate: step 1/1. It functions in the pathway isoprenoid biosynthesis; isopentenyl diphosphate biosynthesis via DXP pathway; isopentenyl diphosphate from 1-deoxy-D-xylulose 5-phosphate: step 6/6. Catalyzes the conversion of 1-hydroxy-2-methyl-2-(E)-butenyl 4-diphosphate (HMBPP) into a mixture of isopentenyl diphosphate (IPP) and dimethylallyl diphosphate (DMAPP). Acts in the terminal step of the DOXP/MEP pathway for isoprenoid precursor biosynthesis. In Cronobacter sakazakii (strain ATCC BAA-894) (Enterobacter sakazakii), this protein is 4-hydroxy-3-methylbut-2-enyl diphosphate reductase.